A 459-amino-acid polypeptide reads, in one-letter code: UDP-N-acetylmuramoylalanine--D-glutamate ligase (459 aa).

131–137 (GANGKST) contributes to the ATP binding site.

This sequence belongs to the MurCDEF family.

It is found in the cytoplasm. It carries out the reaction UDP-N-acetyl-alpha-D-muramoyl-L-alanine + D-glutamate + ATP = UDP-N-acetyl-alpha-D-muramoyl-L-alanyl-D-glutamate + ADP + phosphate + H(+). It participates in cell wall biogenesis; peptidoglycan biosynthesis. In terms of biological role, cell wall formation. Catalyzes the addition of glutamate to the nucleotide precursor UDP-N-acetylmuramoyl-L-alanine (UMA). The sequence is that of UDP-N-acetylmuramoylalanine--D-glutamate ligase from Methylococcus capsulatus (strain ATCC 33009 / NCIMB 11132 / Bath).